The primary structure comprises 169 residues: S-ribosylhomocysteine lyase (169 aa).

The Fe cation site is built by His-54, His-58, and Cys-128.

The protein belongs to the LuxS family. As to quaternary structure, homodimer. Fe cation serves as cofactor.

It catalyses the reaction S-(5-deoxy-D-ribos-5-yl)-L-homocysteine = (S)-4,5-dihydroxypentane-2,3-dione + L-homocysteine. Involved in the synthesis of autoinducer 2 (AI-2) which is secreted by bacteria and is used to communicate both the cell density and the metabolic potential of the environment. The regulation of gene expression in response to changes in cell density is called quorum sensing. Catalyzes the transformation of S-ribosylhomocysteine (RHC) to homocysteine (HC) and 4,5-dihydroxy-2,3-pentadione (DPD). This Shewanella amazonensis (strain ATCC BAA-1098 / SB2B) protein is S-ribosylhomocysteine lyase.